The primary structure comprises 901 residues: Protein translocase subunit SecA (901 aa).

ATP is bound by residues Gln87, 105–109, and Asp512; that span reads GEGKT. Zn(2+) is bound by residues Cys885, Cys887, Cys896, and His897.

It belongs to the SecA family. Monomer and homodimer. Part of the essential Sec protein translocation apparatus which comprises SecA, SecYEG and auxiliary proteins SecDF-YajC and YidC. It depends on Zn(2+) as a cofactor.

It localises to the cell inner membrane. The protein resides in the cytoplasm. It carries out the reaction ATP + H2O + cellular proteinSide 1 = ADP + phosphate + cellular proteinSide 2.. Part of the Sec protein translocase complex. Interacts with the SecYEG preprotein conducting channel. Has a central role in coupling the hydrolysis of ATP to the transfer of proteins into and across the cell membrane, serving both as a receptor for the preprotein-SecB complex and as an ATP-driven molecular motor driving the stepwise translocation of polypeptide chains across the membrane. This is Protein translocase subunit SecA from Salmonella typhi.